Consider the following 448-residue polypeptide: Chromosomal replication initiator protein DnaA (448 aa).

The segment at 1-93 (MEQIVSSLWS…KPTEQNLSAS (93 aa)) is domain I, interacts with DnaA modulators. Residues 94-110 (STNKEELTQDTVHKFKT) form a domain II region. A domain III, AAA+ region region spans residues 111-328 (GLNGRLTFDN…GAINRVSAWC (218 aa)). Residues G156, G158, K159, and T160 each coordinate ATP. A domain IV, binds dsDNA region spans residues 329–448 (NFTKRQITID…YTNLTRKLSS (120 aa)).

Belongs to the DnaA family. Oligomerizes as a right-handed, spiral filament on DNA at oriC.

It is found in the cytoplasm. In terms of biological role, plays an essential role in the initiation and regulation of chromosomal replication. ATP-DnaA binds to the origin of replication (oriC) to initiate formation of the DNA replication initiation complex once per cell cycle. Binds the DnaA box (a 9 base pair repeat at the origin) and separates the double-stranded (ds)DNA. Forms a right-handed helical filament on oriC DNA; dsDNA binds to the exterior of the filament while single-stranded (ss)DNA is stabiized in the filament's interior. The ATP-DnaA-oriC complex binds and stabilizes one strand of the AT-rich DNA unwinding element (DUE), permitting loading of DNA polymerase. After initiation quickly degrades to an ADP-DnaA complex that is not apt for DNA replication. Binds acidic phospholipids. This chain is Chromosomal replication initiator protein DnaA, found in Haemophilus ducreyi (strain 35000HP / ATCC 700724).